Reading from the N-terminus, the 125-residue chain is Barwin (125 aa).

Position 1 is a pyrrolidone carboxylic acid (Gln-1). Positions 1-125 constitute a Barwin domain; sequence QQANDVRATY…VNYQFVDCRD (125 aa). Cystine bridges form between Cys-31–Cys-63, Cys-52–Cys-86, and Cys-66–Cys-123.

May be involved in a defense mechanism. Probable plant lectin. Binds weakly a chitin analog. This Hordeum vulgare (Barley) protein is Barwin.